Consider the following 623-residue polypeptide: MPHSDELDAGNVLAVENLNIAFMQDQQKIAAVRNLSFSLQRGETLAIVGESGSGKSVTALALMRLLEQAGGLVQCDKMLLRRRSRDVIELSEQSAAQMRHVRGADMAMIFQEPMTSLNPVFTVGEQIAESIRLHQNASREEAMVEAKRMLDQVRIPEAQTILSRYSHQLSGGMRQRVMIAMALSCRPAVLIADEPTTALDVTIQAQILQLIKVLQKEMSMGVIFITHDMGVVAEIADRVLVIYQGEAVETGTVEQIFHAPQHPYTRALLAAVPQLGAMKGLDYPRRFPLISLEHPAKQEPPIEQKTVVDGEPVLRVRNLVTRFPLRSGLLNRVTREVHAVEKVSFDLWPGETLSLVGESGSGKSTTGRALLRLVESQGGEIIFNGQRIDTLSPGKLQALRRDIQFIFQDPYASLDPRQTIGDSIIEPLRVHGLLPGKDAAARVAWLLERVGLLPEHAWRYPHEFSGGQRQRICIARALALNPKVIIADEAVSALDVSIRGQIINLLLDLQRDFGIAYLFISHDMAVVERISHRVAVMYLGQIVEIGSRCAVFENPQHPYTRKLLAAVPVAEPSRQRPQRVLLSDDLPSNIHLRGEEVAAVSLQCVGPGHYVAQPQSEYAFMRR.

ABC transporter domains lie at 15 to 269 (VENL…RALL) and 314 to 564 (LRVR…RKLL). Residues 49 to 56 (GESGSGKS) and 357 to 364 (GESGSGKS) contribute to the ATP site.

It belongs to the ABC transporter superfamily. Glutathione importer (TC 3.A.1.5.11) family. In terms of assembly, the complex is composed of two ATP-binding proteins (GsiA), two transmembrane proteins (GsiC and GsiD) and a solute-binding protein (GsiB).

Its subcellular location is the cell inner membrane. The catalysed reaction is glutathione(out) + ATP + H2O = glutathione(in) + ADP + phosphate + H(+). Part of the ABC transporter complex GsiABCD involved in glutathione import. Responsible for energy coupling to the transport system. This is Glutathione import ATP-binding protein GsiA from Shigella flexneri serotype 5b (strain 8401).